A 273-amino-acid chain; its full sequence is DNA repair protein RecO (273 aa).

It belongs to the RecO family.

Its function is as follows. Involved in DNA repair and RecF pathway recombination. The polypeptide is DNA repair protein RecO (Saccharopolyspora erythraea (strain ATCC 11635 / DSM 40517 / JCM 4748 / NBRC 13426 / NCIMB 8594 / NRRL 2338)).